A 405-amino-acid chain; its full sequence is Tryptophan synthase beta chain (405 aa).

N6-(pyridoxal phosphate)lysine is present on Lys96.

The protein belongs to the TrpB family. As to quaternary structure, tetramer of two alpha and two beta chains. The cofactor is pyridoxal 5'-phosphate.

The catalysed reaction is (1S,2R)-1-C-(indol-3-yl)glycerol 3-phosphate + L-serine = D-glyceraldehyde 3-phosphate + L-tryptophan + H2O. It functions in the pathway amino-acid biosynthesis; L-tryptophan biosynthesis; L-tryptophan from chorismate: step 5/5. Functionally, the beta subunit is responsible for the synthesis of L-tryptophan from indole and L-serine. The polypeptide is Tryptophan synthase beta chain (Clostridium botulinum (strain Alaska E43 / Type E3)).